A 156-amino-acid chain; its full sequence is MNLNATLFAQMVVFLVLAWFTMKFVWPPLINALDERSKKIADGLAAAEKGKAELDAAHKRVDQELAQARNDGQQRIADAEKRAQAVAEEIKSNAQAEAARIIAQAKAEAEQQIVKAREALRGEVATLAVKGAEQILKREVDQTAHAQLLNQLKAEL.

The helical transmembrane segment at 7–29 (LFAQMVVFLVLAWFTMKFVWPPL) threads the bilayer.

The protein belongs to the ATPase B chain family. In terms of assembly, F-type ATPases have 2 components, F(1) - the catalytic core - and F(0) - the membrane proton channel. F(1) has five subunits: alpha(3), beta(3), gamma(1), delta(1), epsilon(1). F(0) has three main subunits: a(1), b(2) and c(10-14). The alpha and beta chains form an alternating ring which encloses part of the gamma chain. F(1) is attached to F(0) by a central stalk formed by the gamma and epsilon chains, while a peripheral stalk is formed by the delta and b chains.

The protein localises to the cell inner membrane. Functionally, f(1)F(0) ATP synthase produces ATP from ADP in the presence of a proton or sodium gradient. F-type ATPases consist of two structural domains, F(1) containing the extramembraneous catalytic core and F(0) containing the membrane proton channel, linked together by a central stalk and a peripheral stalk. During catalysis, ATP synthesis in the catalytic domain of F(1) is coupled via a rotary mechanism of the central stalk subunits to proton translocation. Component of the F(0) channel, it forms part of the peripheral stalk, linking F(1) to F(0). The chain is ATP synthase subunit b from Burkholderia lata (strain ATCC 17760 / DSM 23089 / LMG 22485 / NCIMB 9086 / R18194 / 383).